The chain runs to 213 residues: Thymidylate kinase (213 aa).

Gly10–Thr17 contacts ATP.

This sequence belongs to the thymidylate kinase family.

The catalysed reaction is dTMP + ATP = dTDP + ADP. Phosphorylation of dTMP to form dTDP in both de novo and salvage pathways of dTTP synthesis. This is Thymidylate kinase from Salmonella choleraesuis (strain SC-B67).